We begin with the raw amino-acid sequence, 302 residues long: Nitrophorin Cim l NP (302 aa).

Positions 1–20 (MKLLLSAGAALAFVLGLCAA) are cleaved as a signal peptide. Position 80 (Cys80) interacts with heme.

The cofactor is heme b. The N-terminus is blocked. Expressed in salivary glands.

The protein localises to the secreted. Its function is as follows. Heme-based protein that delivers nitric oxide gas (NO) to the victim while feeding, resulting in vasodilation. In place of heme, the heme-binding cysteine can also reversibly bind NO when it is present in high concentrations. In Cimex lectularius (Bed bug), this protein is Nitrophorin Cim l NP.